The chain runs to 342 residues: Trans-3-hydroxy-L-proline dehydratase (342 aa).

Residue Ser-90 is the Proton acceptor of the active site. Substrate is bound by residues 91–92 (GS), Asp-252, and 257–258 (GT).

This sequence belongs to the proline racemase family.

It catalyses the reaction trans-3-hydroxy-L-proline = 1-pyrroline-2-carboxylate + H2O. In terms of biological role, catalyzes the dehydration of trans-3-hydroxy-L-proline (t3LHyp) to Delta(1)-pyrroline-2-carboxylate (Pyr2C). Can also catalyze the epimerization of trans-4-hydroxy-L-proline (t4LHyp) to cis-4-hydroxy-D-proline (c4DHyp), albeit with 150-fold lower efficiency. May be involved in the degradation pathway that converts t3LHyp to L-proline, which would allow R.meliloti to grow on t3LHyp as a sole carbon source. Displays no proline racemase activity. The sequence is that of Trans-3-hydroxy-L-proline dehydratase from Rhizobium meliloti (strain 1021) (Ensifer meliloti).